Reading from the N-terminus, the 690-residue chain is MTKINKLEYIRNIGICAHIDAGKTTTTERILYYTGKSHKIGEVHEGGATMDWMEQEQERGITITSAATTCRWQDKIINIIDTPGHVDFTIEVERSLRVLDGAVAVFDGVAGVEPQSETVWRQADKYNVPRMCFINKMDRMGADFYRCVEMIKDRLGAKPLVIQLPVGIEENFKGIIDLVKMKAVIWKDESLGAEYFAEDIPADMKYKAEEYRTKLLDMVVELDDHIMEKYLSGEEVTEEEIERLIRNGTISAAFYPVLCGSAFKNKGVQPLLDAVVGFLPSPIDIGIVKGIEVSTGEEKDFPISVTEPFAALAFKIMNDPFVGSLTFIRIYSGKITSGSTVINTVKNKREKIGRMLLMHANNREDVKEASAGDIVALAGLKDTTTGDTLSDIDKQVILERMEFPEPVIELAVEPKSTADQEKMGLALSRLAAEDPSFRVSMDHETGQTVIKGMGELHLEIIIDRMRREFKVEANIGAPQVAYRETITKICEIDYTHKKQSGGAGQFARVKIIFEPLNPGEGFVFESKIVGGAVPKEYIPGIEKGLNNIRETGVIAGYPMIDFKATLVDGAFHDVDSSVLAFEIAAKAAFREGMLKGNPKLLEPIMKVEVITPDEYMGDIIGDLNSRRGQIQSMDPRANAQVVTSNVPLAEMFGYVNTLRSLSQGRAQFSMIFSHYDQVPSQIADVIKAKK.

A tr-type G domain is found at 8-283 (EYIRNIGICA…AVVGFLPSPI (276 aa)). Residues 17–24 (AHIDAGKT), 81–85 (DTPGH), and 135–138 (NKMD) contribute to the GTP site.

Belongs to the TRAFAC class translation factor GTPase superfamily. Classic translation factor GTPase family. EF-G/EF-2 subfamily.

It is found in the cytoplasm. Its function is as follows. Catalyzes the GTP-dependent ribosomal translocation step during translation elongation. During this step, the ribosome changes from the pre-translocational (PRE) to the post-translocational (POST) state as the newly formed A-site-bound peptidyl-tRNA and P-site-bound deacylated tRNA move to the P and E sites, respectively. Catalyzes the coordinated movement of the two tRNA molecules, the mRNA and conformational changes in the ribosome. The protein is Elongation factor G of Rickettsia canadensis (strain McKiel).